A 322-amino-acid chain; its full sequence is Acetyl-coenzyme A carboxylase carboxyl transferase subunit alpha (322 aa).

Residues 32–293 enclose the CoA carboxyltransferase C-terminal domain; the sequence is DISEEIARLE…KRALQDALRQ (262 aa).

It belongs to the AccA family. Acetyl-CoA carboxylase is a heterohexamer composed of biotin carboxyl carrier protein (AccB), biotin carboxylase (AccC) and two subunits each of ACCase subunit alpha (AccA) and ACCase subunit beta (AccD).

It is found in the cytoplasm. The catalysed reaction is N(6)-carboxybiotinyl-L-lysyl-[protein] + acetyl-CoA = N(6)-biotinyl-L-lysyl-[protein] + malonyl-CoA. It participates in lipid metabolism; malonyl-CoA biosynthesis; malonyl-CoA from acetyl-CoA: step 1/1. Component of the acetyl coenzyme A carboxylase (ACC) complex. First, biotin carboxylase catalyzes the carboxylation of biotin on its carrier protein (BCCP) and then the CO(2) group is transferred by the carboxyltransferase to acetyl-CoA to form malonyl-CoA. In Aromatoleum aromaticum (strain DSM 19018 / LMG 30748 / EbN1) (Azoarcus sp. (strain EbN1)), this protein is Acetyl-coenzyme A carboxylase carboxyl transferase subunit alpha.